The primary structure comprises 739 residues: Probable beta-glucosidase L (739 aa).

The signal sequence occupies residues Met1–Ala17. Asn40 and Asn224 each carry an N-linked (GlcNAc...) asparagine glycan. Asp252 is an active-site residue. Asn398 carries N-linked (GlcNAc...) asparagine glycosylation.

This sequence belongs to the glycosyl hydrolase 3 family.

It is found in the secreted. The catalysed reaction is Hydrolysis of terminal, non-reducing beta-D-glucosyl residues with release of beta-D-glucose.. It functions in the pathway glycan metabolism; cellulose degradation. Its function is as follows. Beta-glucosidases are one of a number of cellulolytic enzymes involved in the degradation of cellulosic biomass. Catalyzes the last step releasing glucose from the inhibitory cellobiose. This is Probable beta-glucosidase L (bglL) from Aspergillus fumigatus (strain CBS 144.89 / FGSC A1163 / CEA10) (Neosartorya fumigata).